Consider the following 715-residue polypeptide: 1,4-alpha-glucan branching enzyme GlgB (715 aa).

Asp396 functions as the Nucleophile in the catalytic mechanism. Glu449 functions as the Proton donor in the catalytic mechanism.

Belongs to the glycosyl hydrolase 13 family. GlgB subfamily. Monomer.

The enzyme catalyses Transfers a segment of a (1-&gt;4)-alpha-D-glucan chain to a primary hydroxy group in a similar glucan chain.. The protein operates within glycan biosynthesis; glycogen biosynthesis. Its function is as follows. Catalyzes the formation of the alpha-1,6-glucosidic linkages in glycogen by scission of a 1,4-alpha-linked oligosaccharide from growing alpha-1,4-glucan chains and the subsequent attachment of the oligosaccharide to the alpha-1,6 position. In Vibrio vulnificus (strain YJ016), this protein is 1,4-alpha-glucan branching enzyme GlgB.